The following is a 124-amino-acid chain: Small ribosomal subunit protein bS16 (124 aa).

The disordered stretch occupies residues 80–124; the sequence is AGLAKRPARNNPTKAQPGKKAQERAAEAKQKAEEAAAAASEAAAE. The span at 99 to 113 shows a compositional bias: basic and acidic residues; the sequence is KAQERAAEAKQKAEE. The span at 114–124 shows a compositional bias: low complexity; the sequence is AAAAASEAAAE.

Belongs to the bacterial ribosomal protein bS16 family.

This is Small ribosomal subunit protein bS16 from Rhizobium meliloti (strain 1021) (Ensifer meliloti).